The chain runs to 1218 residues: Coatomer subunit alpha-3 (1218 aa).

WD repeat units follow at residues 7–48 (TKSN…DRFD), 49–88 (EHDG…CLFT), 91–132 (GHLD…AVLT), 133–172 (GHNH…KKTV), 202–241 (GHDR…AWEV), 246–285 (GHMN…GIQT), 288–326 (REHD…PAFS), 363–404 (SLNQ…AGRT), and 450–489 (PLPI…GELQ). The segment at 854-893 (AMANGGDGFDAEEGEANEEDGEEGGWDLEDLELPPEAETP) is disordered. Over residues 862–888 (FDAEEGEANEEDGEEGGWDLEDLELPP) the composition is skewed to acidic residues.

As to quaternary structure, oligomeric complex that consists of at least the alpha, beta, beta', gamma, delta, epsilon and zeta subunits.

It localises to the cytoplasm. The protein resides in the golgi apparatus membrane. It is found in the cytoplasmic vesicle. The protein localises to the COPI-coated vesicle membrane. Its function is as follows. The coatomer is a cytosolic protein complex that binds to dilysine motifs and reversibly associates with Golgi non-clathrin-coated vesicles, which further mediate biosynthetic protein transport from the ER, via the Golgi up to the trans Golgi network. Coatomer complex is required for budding from Golgi membranes, and is essential for the retrograde Golgi-to-ER transport of dilysine-tagged proteins. This Oryza sativa subsp. japonica (Rice) protein is Coatomer subunit alpha-3.